The primary structure comprises 520 residues: Pentatricopeptide repeat-containing protein At1g28690, mitochondrial (520 aa).

A mitochondrion-targeting transit peptide spans 1–19; sequence MRIFRFTSISPRILPSNHY. 11 PPR repeats span residues 68–98, 99–133, 134–168, 174–208, 209–235, 236–271, 272–306, 307–337, 338–372, 373–403, and 409–439; these read DLNI…LPKP, TLSA…GEKA, DGYT…RIIK, DDVL…NVVC, CTSM…TKVK, DIVV…GFHP, NIST…GVYT, HIKM…MQEK, NVFS…RIEP, NYVT…MQRD, and KMEH…MPER. The segment at 444–520 is type E motif; it reads IWAALLSSCN…TIGRSWTSED (77 aa).

The protein belongs to the PPR family. PCMP-E subfamily.

The protein resides in the mitochondrion. This Arabidopsis thaliana (Mouse-ear cress) protein is Pentatricopeptide repeat-containing protein At1g28690, mitochondrial (PCMP-E34).